Consider the following 389-residue polypeptide: MADLGFGDARSGNGSRSQCSRGKAMLLALGKGLPEQVLPQEKVVETYLQDTICDDPATRAKLERLCKTTTVRTRYTVMSKELLDEHPELRTEGTPTLTPRLDICNAAVLELGATAARAALGEWGRPAADITHLVYISSSELRLPGGDLFLATRLGLHPNTVRTSLLFLGCSGGAAALRTAKDIAENNPGSRVLVVAAETTVLGFRPPSPDRPYDLVGAALFGDGASAAIIGAGPIAAEESPFLELQFSTQEFLPGTDKVIDGKITEEGINFKLGRDLPEKIENRIEGFCRTLMDRVGIKEFNDVFWAVHPGGPAILNRLEVCLELQPEKLKISRKALMNYGNVSSNTVFYVLEYLRDELKKGMIREEWGLILAFGPGITFEGMLVRGIN.

Catalysis depends on Cys-170, which acts as the Nucleophile.

The protein belongs to the thiolase-like superfamily. Chalcone/stilbene synthases family. As to expression, expressed in anthers. Expressed in young and adult flowers.

In terms of biological role, plant type III polyketide synthases (PKSs) that catalyzes the condensation of fatty acyl-CoA with malonyl-CoA to generate triketide and tetraketide alpha-pyrones, the main components of pollen exine and potential sporopollenin precursors. This is Type III polyketide synthase 21 (PKS21) from Oryza sativa subsp. japonica (Rice).